The chain runs to 600 residues: Elongation factor 4 (600 aa).

The 183-residue stretch at 5–187 (KYIRNFSIIA…AIINKLPAPK (183 aa)) folds into the tr-type G domain. GTP is bound by residues 17–22 (DHGKST) and 134–137 (NKID).

It belongs to the TRAFAC class translation factor GTPase superfamily. Classic translation factor GTPase family. LepA subfamily.

It localises to the cell inner membrane. It catalyses the reaction GTP + H2O = GDP + phosphate + H(+). In terms of biological role, required for accurate and efficient protein synthesis under certain stress conditions. May act as a fidelity factor of the translation reaction, by catalyzing a one-codon backward translocation of tRNAs on improperly translocated ribosomes. Back-translocation proceeds from a post-translocation (POST) complex to a pre-translocation (PRE) complex, thus giving elongation factor G a second chance to translocate the tRNAs correctly. Binds to ribosomes in a GTP-dependent manner. This Rickettsia prowazekii (strain Madrid E) protein is Elongation factor 4.